A 122-amino-acid chain; its full sequence is Dihydroneopterin aldolase (122 aa).

Residues E21, Y53, and 72–73 (VE) each bind substrate. Catalysis depends on K98, which acts as the Proton donor/acceptor.

Belongs to the DHNA family. In terms of assembly, homooctamer.

The enzyme catalyses 7,8-dihydroneopterin = 6-hydroxymethyl-7,8-dihydropterin + glycolaldehyde. The catalysed reaction is 7,8-dihydroneopterin = 7,8-dihydromonapterin. The protein operates within cofactor biosynthesis; tetrahydrofolate biosynthesis; 2-amino-4-hydroxy-6-hydroxymethyl-7,8-dihydropteridine diphosphate from 7,8-dihydroneopterin triphosphate: step 3/4. In terms of biological role, catalyzes the conversion of 7,8-dihydroneopterin to 6-hydroxymethyl-7,8-dihydropterin. Can use L-threo-dihydroneopterin and D-erythro-dihydroneopterin as substrates for the formation of 6-hydroxymethyldihydropterin, but it can also catalyze the epimerization of carbon 2' of dihydroneopterin to dihydromonapterin at appreciable velocity. This chain is Dihydroneopterin aldolase (folB), found in Escherichia coli O6:H1 (strain CFT073 / ATCC 700928 / UPEC).